A 96-amino-acid chain; its full sequence is UPF0125 protein YfjF (96 aa).

Belongs to the UPF0125 (RnfH) family.

The protein is UPF0125 protein YfjF (yfjF) of Escherichia coli O157:H7.